The following is a 159-amino-acid chain: ATP synthase subunit b 2 (159 aa).

Residues 1-21 (MDATFWALIGLIIFLAILAYL) form a helical membrane-spanning segment.

Belongs to the ATPase B chain family. As to quaternary structure, F-type ATPases have 2 components, F(1) - the catalytic core - and F(0) - the membrane proton channel. F(1) has five subunits: alpha(3), beta(3), gamma(1), delta(1), epsilon(1). F(0) has three main subunits: a(1), b(2) and c(10-14). The alpha and beta chains form an alternating ring which encloses part of the gamma chain. F(1) is attached to F(0) by a central stalk formed by the gamma and epsilon chains, while a peripheral stalk is formed by the delta and b chains.

It is found in the cell inner membrane. Its function is as follows. F(1)F(0) ATP synthase produces ATP from ADP in the presence of a proton or sodium gradient. F-type ATPases consist of two structural domains, F(1) containing the extramembraneous catalytic core and F(0) containing the membrane proton channel, linked together by a central stalk and a peripheral stalk. During catalysis, ATP synthesis in the catalytic domain of F(1) is coupled via a rotary mechanism of the central stalk subunits to proton translocation. In terms of biological role, component of the F(0) channel, it forms part of the peripheral stalk, linking F(1) to F(0). This Brucella anthropi (strain ATCC 49188 / DSM 6882 / CCUG 24695 / JCM 21032 / LMG 3331 / NBRC 15819 / NCTC 12168 / Alc 37) (Ochrobactrum anthropi) protein is ATP synthase subunit b 2.